The chain runs to 426 residues: Serine--tRNA ligase (426 aa).

An L-serine-binding site is contributed by 231–233; the sequence is TAE. Position 262 to 264 (262 to 264) interacts with ATP; the sequence is RSE. Glutamate 285 contributes to the L-serine binding site. Residue 349-352 coordinates ATP; it reads EISS. An L-serine-binding site is contributed by serine 385.

This sequence belongs to the class-II aminoacyl-tRNA synthetase family. Type-1 seryl-tRNA synthetase subfamily. In terms of assembly, homodimer. The tRNA molecule binds across the dimer.

It is found in the cytoplasm. It catalyses the reaction tRNA(Ser) + L-serine + ATP = L-seryl-tRNA(Ser) + AMP + diphosphate + H(+). The enzyme catalyses tRNA(Sec) + L-serine + ATP = L-seryl-tRNA(Sec) + AMP + diphosphate + H(+). It functions in the pathway aminoacyl-tRNA biosynthesis; selenocysteinyl-tRNA(Sec) biosynthesis; L-seryl-tRNA(Sec) from L-serine and tRNA(Sec): step 1/1. Functionally, catalyzes the attachment of serine to tRNA(Ser). Is also able to aminoacylate tRNA(Sec) with serine, to form the misacylated tRNA L-seryl-tRNA(Sec), which will be further converted into selenocysteinyl-tRNA(Sec). In Saccharophagus degradans (strain 2-40 / ATCC 43961 / DSM 17024), this protein is Serine--tRNA ligase.